The sequence spans 30 residues: Cytochrome b6/f complex 12.6 kDa peptide (30 aa).

The interval 1-30 (SGSGVRSAKKGGKAQGGQAGVGYKGSTEPG) is disordered. Positions 13 to 23 (KAQGGQAGVGY) are enriched in gly residues.

Its subcellular location is the plastid. It localises to the chloroplast. Functionally, may be a component of the cytochrome b6/f complex which is part of the photosynthetic respiratory chain. In Euglena gracilis, this protein is Cytochrome b6/f complex 12.6 kDa peptide.